The following is a 481-amino-acid chain: ADAMTS-like protein 5 (481 aa).

The first 42 residues, 1-42, serve as a signal peptide directing secretion; sequence MGKLRPGRVEWLASGHTERPHLFQNLLLFLWALLNCGLGVSA. Residues 45–97 form the TSP type-1 domain; sequence PGEWTPWVSWTRCSSSCGRGVSVRSRRCLRLPGEEPCWGDSHEYRLCQLPDCP. Disulfide bonds link C57–C91, C61–C96, and C72–C81. N-linked (GlcNAc...) asparagine glycosylation is present at N218. The interval 331–361 is disordered; the sequence is QPQPRGVEPQPPAAPAVTPAQTPTLAPDPCP. The segment covering 345-355 has biased composition (low complexity); the sequence is PAVTPAQTPTL. 3 disulfide bridges follow: C360/C425, C363/C427, and C377/C479. Positions 360–479 constitute an NTR domain; that stretch reads CPPCPDTRGR…SRIRLTARRC (120 aa).

In terms of assembly, interacts with heparin, FBN1 and FBN2. Post-translationally, proteolytically cleaved to release a C-terminal fragment containing the NTR domain. Contains at least one additional N-linked glycosylation site.

It is found in the secreted. The protein localises to the extracellular space. Its subcellular location is the extracellular matrix. Functionally, may play a role in modulation of fibrillin microfibrils in the extracellular matrix (ECM). This Homo sapiens (Human) protein is ADAMTS-like protein 5 (ADAMTSL5).